Here is a 277-residue protein sequence, read N- to C-terminus: Indole-3-glycerol phosphate synthase (277 aa).

This sequence belongs to the TrpC family.

The catalysed reaction is 1-(2-carboxyphenylamino)-1-deoxy-D-ribulose 5-phosphate + H(+) = (1S,2R)-1-C-(indol-3-yl)glycerol 3-phosphate + CO2 + H2O. The protein operates within amino-acid biosynthesis; L-tryptophan biosynthesis; L-tryptophan from chorismate: step 4/5. The chain is Indole-3-glycerol phosphate synthase from Pseudomonas putida (strain ATCC 700007 / DSM 6899 / JCM 31910 / BCRC 17059 / LMG 24140 / F1).